We begin with the raw amino-acid sequence, 286 residues long: uncharacterized protein (286 aa).

Residues Ile-54, Asn-128, and Lys-162 each contribute to the NADP(+) site. Ser-178 acts as the Proton donor in catalysis. Tyr-192, Lys-196, Ile-225, and Thr-227 together coordinate NADP(+). The active-site Proton acceptor is Tyr-192. Lys-196 acts as the Lowers pKa of active site Tyr in catalysis.

The protein belongs to the short-chain dehydrogenases/reductases (SDR) family.

This is an uncharacterized protein from Schizosaccharomyces pombe (strain 972 / ATCC 24843) (Fission yeast).